Consider the following 289-residue polypeptide: 4-diphosphocytidyl-2-C-methyl-D-erythritol kinase (289 aa).

The active site involves Lys-10. 94–104 (PVAAGLAGGSS) provides a ligand contact to ATP. Asp-136 is a catalytic residue.

This sequence belongs to the GHMP kinase family. IspE subfamily.

The enzyme catalyses 4-CDP-2-C-methyl-D-erythritol + ATP = 4-CDP-2-C-methyl-D-erythritol 2-phosphate + ADP + H(+). It participates in isoprenoid biosynthesis; isopentenyl diphosphate biosynthesis via DXP pathway; isopentenyl diphosphate from 1-deoxy-D-xylulose 5-phosphate: step 3/6. Functionally, catalyzes the phosphorylation of the position 2 hydroxy group of 4-diphosphocytidyl-2C-methyl-D-erythritol. The chain is 4-diphosphocytidyl-2-C-methyl-D-erythritol kinase from Bacillus licheniformis (strain ATCC 14580 / DSM 13 / JCM 2505 / CCUG 7422 / NBRC 12200 / NCIMB 9375 / NCTC 10341 / NRRL NRS-1264 / Gibson 46).